The chain runs to 113 residues: UPF0482 protein YnfB (113 aa).

A signal peptide spans 1–28; it reads MKITLSKRIGLLAFLLPCALALSTTVHA.

It belongs to the UPF0482 family.

This chain is UPF0482 protein YnfB, found in Shigella dysenteriae serotype 1 (strain Sd197).